The sequence spans 168 residues: Myosin regulatory light chain 11 (168 aa).

A N,N,N-trimethylalanine modification is found at Ala-2. Ser-15 is subject to Phosphoserine. 3 EF-hand domains span residues 24 to 59 (TQIQEFKEAFTVIDQNRDGIIDKDDLRETFAAMGRL), 94 to 129 (DPEDVIMGAFKVLDPDGKGSIKKSFLEELLTTQCDR), and 130 to 165 (FTPEEIKNMWAAFPPDVAGNVDYKNICYVITHGEDK). Ca(2+)-binding residues include Asp-37, Asn-39, Asp-41, and Asp-48.

As to quaternary structure, myosin is a hexamer of 2 heavy chains and 4 light chains. Post-translationally, the N-terminus is blocked. N,N,N-trimethylalanine, found in other myosin light chains would not have been detected in the N-terminal tryptic peptide in PubMed:7358336 because it would remain trimethylated and ninhydrin negative after hydrolysis.

Myosin regulatory subunit that plays an essential to maintain muscle integrity during early development. Plays a role in muscle contraction. In Gallus gallus (Chicken), this protein is Myosin regulatory light chain 11 (MYL11).